We begin with the raw amino-acid sequence, 361 residues long: Sensor protein VanSC (361 aa).

2 consecutive transmembrane segments (helical) span residues 16–36 (FVTTGILLAFLVMIPLVIRFI) and 59–79 (WLFCVAIGALLIWFGTTIYYM). One can recognise a Histidine kinase domain in the interval 144–359 (YLAHDLRTPL…IFNVRLPKPA (216 aa)). H147 is modified (phosphohistidine; by autocatalysis). E252 is a binding site for Mg(2+).

Post-translationally, autophosphorylated.

Its subcellular location is the membrane. It carries out the reaction ATP + protein L-histidine = ADP + protein N-phospho-L-histidine.. This is Sensor protein VanSC from Enterococcus gallinarum.